The sequence spans 106 residues: UPF0145 protein CTC_01500 (106 aa).

This sequence belongs to the UPF0145 family.

The chain is UPF0145 protein CTC_01500 from Clostridium tetani (strain Massachusetts / E88).